A 324-amino-acid chain; its full sequence is Lipoyl synthase (324 aa).

7 residues coordinate [4Fe-4S] cluster: Cys71, Cys76, Cys82, Cys97, Cys101, Cys104, and Ser311. Residues 83–300 (FGHGTATFLI…GDKAREMGFT (218 aa)) form the Radical SAM core domain.

The protein belongs to the radical SAM superfamily. Lipoyl synthase family. Requires [4Fe-4S] cluster as cofactor.

Its subcellular location is the cytoplasm. It catalyses the reaction [[Fe-S] cluster scaffold protein carrying a second [4Fe-4S](2+) cluster] + N(6)-octanoyl-L-lysyl-[protein] + 2 oxidized [2Fe-2S]-[ferredoxin] + 2 S-adenosyl-L-methionine + 4 H(+) = [[Fe-S] cluster scaffold protein] + N(6)-[(R)-dihydrolipoyl]-L-lysyl-[protein] + 4 Fe(3+) + 2 hydrogen sulfide + 2 5'-deoxyadenosine + 2 L-methionine + 2 reduced [2Fe-2S]-[ferredoxin]. Its pathway is protein modification; protein lipoylation via endogenous pathway; protein N(6)-(lipoyl)lysine from octanoyl-[acyl-carrier-protein]: step 2/2. In terms of biological role, catalyzes the radical-mediated insertion of two sulfur atoms into the C-6 and C-8 positions of the octanoyl moiety bound to the lipoyl domains of lipoate-dependent enzymes, thereby converting the octanoylated domains into lipoylated derivatives. The sequence is that of Lipoyl synthase from Nitrosococcus oceani (strain ATCC 19707 / BCRC 17464 / JCM 30415 / NCIMB 11848 / C-107).